A 562-amino-acid chain; its full sequence is MVIVVFDLLPRVGLKPRDYLLRIVLPALITSIVLILLGFMLFSGIILYIYLLLPIIILVSAIGYPYIALDSQKNKINERLHIFITKFGTLSITDLNRKDLLKILSEEREELGELAKESEKLYVLTDKWGRSLAEACRFLAQRTPSSEFADFLDRLAYALDSGEELKEFLIKEQDIVMDDYAAFYKRMLYSLDMYKELYVSAMTSIAFFLAFSILVPFLLPYNFVFMATIALFAFFAVELLIVVVIRNRLPFDRLWHTGEKPTETDIKLRKWLIISVILVVILLPFLLWAKYIVGLSPFSQMPYMILVALGFTPLAIGGFVALKEEEKVKRKEFVFPDFLRSLGDSVSAKGGGMVSSLEYLSNHDFGPLTHDIKRLYKRLALGIDSNKSWRLFGFDSCSYLIQLFSDIFSRCIYFGGDPKTAAEIISKNFRKIVQLRKSKYQNIQQFVGVVYGLGGGLALALFASLGVAKMINDLYSSLSIPETVIHILNIAPISNVDVVEYIIFGSLIVYSIISAILIKIMDGGHKFVSLLHFVAILWICAIVAYITKLIVSQVLGVSVPLY.

9 consecutive transmembrane segments (helical) span residues 32-52 (IVLI…IYLL), 53-73 (LPII…DSQK), 199-219 (VSAM…PFLL), 225-245 (FMAT…VVVI), 273-293 (IISV…KYIV), 302-322 (PYMI…FVAL), 446-466 (FVGV…ASLG), 498-518 (VVEY…AILI), and 527-547 (FVSL…AYIT).

To M.voltae FlaJ. It to M.jannaschii MJ1286.

The protein localises to the cell membrane. It is found in the archaeal flagellum. The protein is Flagella accessory protein J (flaJ) of Methanocaldococcus jannaschii (strain ATCC 43067 / DSM 2661 / JAL-1 / JCM 10045 / NBRC 100440) (Methanococcus jannaschii).